A 328-amino-acid polypeptide reads, in one-letter code: uncharacterized protein (328 aa).

In terms of domain architecture, SIS spans 37–179 (LTEKLLCHQG…AMTLLRCRKI (143 aa)). 52–57 (GIGKSG) contacts ATP. 2 CBS domains span residues 207 to 264 (PRTE…GGDI) and 273 to 328 (MTRN…AGLL).

The protein belongs to the SIS family. GutQ/KpsF subfamily.

This is an uncharacterized protein from Chlamydia trachomatis serovar D (strain ATCC VR-885 / DSM 19411 / UW-3/Cx).